Reading from the N-terminus, the 103-residue chain is NADH-quinone oxidoreductase subunit K 1 (103 aa).

Helical transmembrane passes span 6-26 (LGHF…GIFL), 32-52 (IIIL…LVAF), and 67-87 (LVLT…VVFF).

This sequence belongs to the complex I subunit 4L family. NDH-1 is composed of 14 different subunits. Subunits NuoA, H, J, K, L, M, N constitute the membrane sector of the complex.

It is found in the cell inner membrane. It carries out the reaction a quinone + NADH + 5 H(+)(in) = a quinol + NAD(+) + 4 H(+)(out). NDH-1 shuttles electrons from NADH, via FMN and iron-sulfur (Fe-S) centers, to quinones in the respiratory chain. The immediate electron acceptor for the enzyme in this species is believed to be ubiquinone. Couples the redox reaction to proton translocation (for every two electrons transferred, four hydrogen ions are translocated across the cytoplasmic membrane), and thus conserves the redox energy in a proton gradient. The polypeptide is NADH-quinone oxidoreductase subunit K 1 (Rhodopseudomonas palustris (strain ATCC BAA-98 / CGA009)).